The sequence spans 141 residues: Large ribosomal subunit protein uL13 (141 aa).

The protein belongs to the universal ribosomal protein uL13 family. In terms of assembly, part of the 50S ribosomal subunit.

This protein is one of the early assembly proteins of the 50S ribosomal subunit, although it is not seen to bind rRNA by itself. It is important during the early stages of 50S assembly. The polypeptide is Large ribosomal subunit protein uL13 (Deinococcus deserti (strain DSM 17065 / CIP 109153 / LMG 22923 / VCD115)).